Here is a 333-residue protein sequence, read N- to C-terminus: Fructose-1,6-bisphosphatase class 1 (333 aa).

Residues Glu90, Asp112, Leu114, and Asp115 each contribute to the Mg(2+) site. Residues 115 to 118 (DGSS), Asn207, and Lys273 contribute to the substrate site. Mg(2+) is bound at residue Glu279.

This sequence belongs to the FBPase class 1 family. In terms of assembly, homotetramer. Mg(2+) serves as cofactor.

It is found in the cytoplasm. It carries out the reaction beta-D-fructose 1,6-bisphosphate + H2O = beta-D-fructose 6-phosphate + phosphate. The protein operates within carbohydrate biosynthesis; gluconeogenesis. This Aromatoleum aromaticum (strain DSM 19018 / LMG 30748 / EbN1) (Azoarcus sp. (strain EbN1)) protein is Fructose-1,6-bisphosphatase class 1.